A 688-amino-acid polypeptide reads, in one-letter code: PTS system glucoside-specific EIICBA component (688 aa).

Residues Lys3–Asp427 enclose the PTS EIIC type-1 domain. 10 consecutive transmembrane segments (helical) span residues Ile12–Phe32, Leu81–Met101, Leu137–Leu157, Phe182–Trp202, Leu223–Ile243, Ala284–Ile304, Val315–Pro335, Phe340–Leu360, Leu364–Gly384, and Leu395–Ile415. The region spanning Ala438–Lys519 is the PTS EIIB type-1 domain. The Phosphocysteine intermediate; for EIIB activity role is filled by Cys460. The PTS EIIA type-1 domain maps to Asp560–Asn664. Residue His612 is the Tele-phosphohistidine intermediate; for EIIA activity of the active site.

The protein localises to the cell membrane. Functionally, the phosphoenolpyruvate-dependent sugar phosphotransferase system (sugar PTS), a major carbohydrate active -transport system, catalyzes the phosphorylation of incoming sugar substrates concomitantly with their translocation across the cell membrane. This system is involved in alpha- and beta-glucoside transport. The polypeptide is PTS system glucoside-specific EIICBA component (glcB) (Staphylococcus aureus (strain USA300)).